Consider the following 610-residue polypeptide: UvrABC system protein C (610 aa).

Residues 16–94 enclose the GIY-YIG domain; the sequence is SQPGVYSMYD…IKLYQPRYNV (79 aa). The region spanning 204–239 is the UVR domain; sequence QQVLNQLVERMELASRALNFEDAAHARDQIQAVRRV.

This sequence belongs to the UvrC family. In terms of assembly, interacts with UvrB in an incision complex.

The protein resides in the cytoplasm. The UvrABC repair system catalyzes the recognition and processing of DNA lesions. UvrC both incises the 5' and 3' sides of the lesion. The N-terminal half is responsible for the 3' incision and the C-terminal half is responsible for the 5' incision. The chain is UvrABC system protein C from Sodalis glossinidius (strain morsitans).